Consider the following 256-residue polypeptide: Low molecular mass lipoprotein PBMHP-6 (256 aa).

The first 19 residues, 1 to 19 (MRLTLFAFVLAVCALASNA), serve as a signal peptide directing secretion.

Belongs to the 30 kDa lipoprotein family.

The protein localises to the secreted. This Bombyx mori (Silk moth) protein is Low molecular mass lipoprotein PBMHP-6.